Reading from the N-terminus, the 71-residue chain is Conotoxin AbVIG (71 aa).

The signal sequence occupies residues 1-17 (VLIIAVLFLTACQLTTA). Residues 18 to 40 (ETSSRGKQKHRALRSTDKNSRMT) constitute a propeptide that is removed on maturation. 3 disulfides stabilise this stretch: Cys-43/Cys-57, Cys-50/Cys-61, and Cys-56/Cys-68.

Belongs to the conotoxin O1 superfamily. In terms of tissue distribution, expressed by the venom duct.

The protein resides in the secreted. In Conus abbreviatus (Abbreviated cone), this protein is Conotoxin AbVIG.